Here is a 563-residue protein sequence, read N- to C-terminus: Solute carrier family 22 member 1 (563 aa).

Over 1–21 (MLTVDDVLEQVGEFGWFQKQT) the chain is Cytoplasmic. The chain crosses the membrane as a helical span at residues 22 to 42 (FLILCLLSAAFAPIYVGIVFL). Topologically, residues 43–144 (AFTPDHRCRS…LVCDDSWKVD (102 aa)) are extracellular. Asparagine 71 carries N-linked (GlcNAc...) asparagine glycosylation. Residues 145–165 (LFQSCVNLGFFLGSLGVGYIA) traverse the membrane as a helical segment. Over 166-171 (DRFGRK) the chain is Cytoplasmic. Residues 172–192 (VCLLATTLTCASLGVLTAVAP) form a helical membrane-spanning segment. The Extracellular portion of the chain corresponds to 193–196 (DYTS). Residues 197–219 (LLIFRLLQGLVSKGSWTAGYTLI) form a helical membrane-spanning segment. Residues 220 to 232 (TEFVGLGYRRTVA) lie on the Cytoplasmic side of the membrane. Residues 233–253 (ILYQMAFTVGLVLLSGLAYIL) form a helical membrane-spanning segment. Over 254-257 (PHWR) the chain is Extracellular. Residues 258-278 (WLQLAVSLPIFLLLFRFWFVP) form a helical membrane-spanning segment. Positions 278 to 282 (PESPR) match the Proline-rich sequence motif. Topologically, residues 279–342 (ESPRWLLSQK…FRTPNLRKYT (64 aa)) are cytoplasmic. Serine 328 carries the post-translational modification Phosphoserine. A helical membrane pass occupies residues 343–363 (FILMYLWFTSSVVYQGLIMHV). At 364–371 (GATGGNLY) the chain is on the extracellular side. Residues 372 to 392 (LDFLYSALVEFPAGFIILVTI) traverse the membrane as a helical segment. Residues 393–398 (DRFGRR) are Cytoplasmic-facing. A helical transmembrane segment spans residues 399–418 (YPLATSNLAAGLACFLMIFI). Topologically, residues 419 to 423 (PHDLP) are extracellular. The helical transmembrane segment at 424–446 (WLNIMVACVGRMGITIVFQMVCL) threads the bilayer. Topologically, residues 447–459 (VNAELFPTFIRNL) are cytoplasmic. A helical membrane pass occupies residues 460–480 (GMMVCSSLCDLGGVLTPFLVF). Residues 481-487 (RLMEVWQ) lie on the Extracellular side of the membrane. Residues 488–508 (GSPLILFAALGLVAGGMTLLL) traverse the membrane as a helical segment. At 509–563 (PETKGVTLPETIEDAENLQRKAKPKENKIYLQVQTSELNTQAAERDASQGTAQQK) the chain is on the cytoplasmic side.

Belongs to the major facilitator (TC 2.A.1) superfamily. Organic cation transporter (TC 2.A.1.19) family. Phosphorylated.

The protein localises to the basolateral cell membrane. It is found in the apical cell membrane. It localises to the lateral cell membrane. The protein resides in the basal cell membrane. Its subcellular location is the cell membrane. The catalysed reaction is 1-methylnicotinamide(out) = 1-methylnicotinamide(in). It carries out the reaction dopamine(out) = dopamine(in). The enzyme catalyses serotonin(out) = serotonin(in). It catalyses the reaction (R)-adrenaline(out) = (R)-adrenaline(in). The catalysed reaction is (R)-noradrenaline(out) = (R)-noradrenaline(in). It carries out the reaction histamine(out) = histamine(in). The enzyme catalyses guanidine(out) = guanidine(in). It catalyses the reaction choline(out) = choline(in). The catalysed reaction is acetylcholine(in) = acetylcholine(out). It carries out the reaction thiamine(in) = thiamine(out). The enzyme catalyses spermidine(in) = spermidine(out). It catalyses the reaction agmatine(out) = agmatine(in). The catalysed reaction is putrescine(out) = putrescine(in). It carries out the reaction (R)-carnitine(in) = (R)-carnitine(out). The enzyme catalyses O-isobutanoyl-(R)-carnitine(in) = O-isobutanoyl-(R)-carnitine(out). It catalyses the reaction O-acetyl-(R)-carnitine(in) = O-acetyl-(R)-carnitine(out). The catalysed reaction is O-3-hydroxybutanoyl-(R)-carnitine(in) = O-3-hydroxybutanoyl-(R)-carnitine(out). It carries out the reaction O-propanoyl-(R)-carnitine(in) = O-propanoyl-(R)-carnitine(out). The enzyme catalyses O-butanoyl-(R)-carnitine(in) = O-butanoyl-(R)-carnitine(out). It catalyses the reaction O-2-methylbutanoyl-(R)-carnitine(in) = O-2-methylbutanoyl-(R)-carnitine(out). The catalysed reaction is O-3-methylbutanoyl-(R)-carnitine(in) = O-3-methylbutanoyl-(R)-carnitine(out). It carries out the reaction O-hexanoyl-(R)-carnitine(in) = O-hexanoyl-(R)-carnitine(out). The enzyme catalyses L-histidyl-L-proline diketopiperazine(in) = L-histidyl-L-proline diketopiperazine(out). It catalyses the reaction (R)-salsolinol(in) = (R)-salsolinol(out). The catalysed reaction is prostaglandin F2alpha(out) = prostaglandin F2alpha(in). It carries out the reaction prostaglandin E2(out) = prostaglandin E2(in). With respect to regulation, phosphorylation of the transporter leads to changes in its substrate affinity, resulting in a regulation of the transport activity. In contrast with rat ortholog, ASP uptake is inhibited by protein kinase A (PKA) and C (PKC) activation. ASP uptake is also endogenously activated by calmodulin, the calmodulin-dependent kinase II and LCK tyrosine kinase. Inhibited by cGMP, most likely through a cGMP-binding protein that interacts with OCT1. Functionally, electrogenic voltage-dependent transporter that mediates the transport of a variety of organic cations such as endogenous bioactive amines, cationic drugs and xenobiotics. Functions as a pH- and Na(+)-independent, bidirectional transporter. Cation cellular uptake or release is driven by the electrochemical potential (i.e. membrane potential and concentration gradient) and substrate selectivity. Hydrophobicity is a major requirement for recognition in polyvalent substrates and inhibitors. Primarily expressed in the basolateral membrane of hepatocytes and proximal tubules and involved in the uptake and disposition of cationic compounds from the blood by hepatic and renal clearance. Most likely functions as an uptake carrier in enterocytes contributing to the intestinal elimination of organic cations from the systemic circulation. Transports endogenous monoamines such as N-1-methylnicotinamide (NMN), guanidine, neurotransmitters dopamine, serotonin, noradrenaline, adrenaline and histamine, and quaternary ammonium compound such as choline. Also transports natural polyamines such as spermidine, agmatine and putrescine at low affinity, but relatively high turnover. Involved in the hepatic and intestinal uptake of the vitamin B1/thiamine, hence regulating hepatic lipid and energy metabolism. Contributes to the influx and efflux of fatty acid carriers carnitines and acylcarnitines across the basolateral membrane of hepatocytes, from the liver to the systemic circulation and inversely and may be involved in regulating the systemic availability of hepatic acylcarnitines. Also capable of transporting non-amine endogenous compounds such as prostaglandin E2 (PGE2) and prostaglandin F2-alpha (PGF2-alpha). May contribute to the transport of cationic compounds in testes across the blood-testis-barrier. Also mediates the uptake of xenobiotics tributylmethylammonium (TBuMA), quinidine, N-methyl-quinine (NMQ), N-methyl-quinidine (NMQD) N-(4,4-azo-n-pentyl)-quinuclidine (APQ), azidoprocainamide methoiodide (AMP), N-(4,4-azo-n-pentyl)-21-deoxyajmalinium (APDA) and 4-(4-(dimethylamino)styryl)-N-methylpyridinium (ASP). The chain is Solute carrier family 22 member 1 (SLC22A1) from Bos taurus (Bovine).